Consider the following 455-residue polypeptide: Ammonium transporter Rh type B (455 aa).

Topologically, residues 1–10 (MARIPRHRRL) are cytoplasmic. The helical transmembrane segment at 11–31 (VLPLLCLLFQGATSLLFAIFV) threads the bilayer. Residues 32–58 (RYNHETDAALWHWGNHSNVDNEFYFRY) lie on the Extracellular side of the membrane. Asn-46 is a glycosylation site (N-linked (GlcNAc...) asparagine). A helical membrane pass occupies residues 59 to 79 (PSFQDVHVMVFVGFGFLMVFL). Over 80-83 (QRYG) the chain is Cytoplasmic. A helical membrane pass occupies residues 84–104 (FSSVGFTFLVATFTLQWATLL). At 105–121 (QGFLHSFHGGHIHIGVE) the chain is on the extracellular side. A helical transmembrane segment spans residues 122-142 (SLINADFCAGAVLISFGAVLG). Residues 143–148 (KTGPAQ) are Cytoplasmic-facing. The chain crosses the membrane as a helical span at residues 149-169 (LLLMALLEAVLFSVNEFILLS). Over 170 to 176 (LLGVRDA) the chain is Extracellular. A helical transmembrane segment spans residues 177–197 (GGSMTIHTFGAYFGLFLSRVL). Residues 198 to 216 (YRSQLEKSRHRQTSVYNSD) lie on the Cytoplasmic side of the membrane. Residues 217-237 (LFAMIGTIFLWVFWPSFNSAP) traverse the membrane as a helical segment. Topologically, residues 238-247 (TALGDGQHRT) are extracellular. The chain crosses the membrane as a helical span at residues 248-270 (VVNTYYSLTASTLSTFALSALVS). Residues 271–274 (GDGR) lie on the Cytoplasmic side of the membrane. A helical transmembrane segment spans residues 275 to 295 (LDMVHIQNAALAGGVVVGTAS). Residue Glu-296 is a topological domain, extracellular. A helical transmembrane segment spans residues 297 to 317 (MMLTPFGALAAGFLAGTVSTL). Topologically, residues 318-340 (GYKFFTPILESRFKLQDTCGVHN) are cytoplasmic. A helical membrane pass occupies residues 341–361 (LHGMPGLLGAILGVLVAALAT). Residues 362-390 (HEAYGDGLQTVFPLIAKGQRSATSQAMYQ) are Extracellular-facing. A helical membrane pass occupies residues 391–411 (LFGMFVTLVFASVGGSLGGLL). Residues 412–455 (LKLPFLDSPPDSQCFEDQVYWEVPGEQEAETQRPLRTEEPDTQA) are Cytoplasmic-facing. The interval 413 to 421 (KLPFLDSPP) is interaction with ANK3.

It belongs to the ammonium transporter (TC 2.A.49) family. Rh subfamily. As to quaternary structure, interacts (via C-terminus) with ANK2 and ANK3; required for targeting to the basolateral membrane. In terms of processing, N-glycosylated. Expressed in kidney by connecting segments and collecting tubules (at protein level).

The protein resides in the basolateral cell membrane. Its subcellular location is the cytoplasmic vesicle membrane. It catalyses the reaction NH4(+)(in) = NH4(+)(out). The enzyme catalyses methylamine(out) = methylamine(in). The catalysed reaction is CO2(out) = CO2(in). In terms of biological role, ammonium transporter involved in the maintenance of acid-base homeostasis. Transports ammonium and its related derivative methylammonium across the basolateral plasma membrane of epithelial cells likely contributing to renal transepithelial ammonia transport and ammonia metabolism. May transport either NH4(+) or NH3 ammonia species predominantly mediating an electrogenic NH4(+) transport. May act as a CO2 channel providing for renal acid secretion. The chain is Ammonium transporter Rh type B (Rhbg) from Rattus norvegicus (Rat).